The following is a 189-amino-acid chain: T cell receptor gamma constant 2 (189 aa).

Residues 10–104 (PKPTIFLPSI…NKNGIDQEII (95 aa)) form the Ig-like domain. Cysteines 32 and 88 form a disulfide. Asn-66, Asn-120, Asn-136, Asn-142, and Asn-151 each carry an N-linked (GlcNAc...) asparagine glycan. Residues 155-177 (YYTYLLLLLKSVVYFAIITCCLL) traverse the membrane as a helical segment.

Gamma-delta TR is a heterodimer composed of a gamma and delta chain; disulfide-linked. The gamma-delta TR is associated with the transmembrane signaling CD3 coreceptor proteins following the stoichiometry: a single gamma-delta TR heterodimer associates with one CD3D-CD3E heterodimer, one CD3G-CD3E heterodimer and one CD247 homodimer forming a stable octameric structure. Upon activation, gamma-delta TR complex associates with FCER1G to initiate intracellular signaling.

It is found in the cell membrane. In terms of biological role, constant region of T cell receptor (TR) gamma chain that participates in the antigen recognition. Gamma-delta TRs recognize a variety of self and foreign non-peptide antigens frequently expressed at the epithelial boundaries between the host and external environment, including endogenous lipids presented by MH-like protein CD1D and phosphoantigens presented by butyrophilin-like molecule BTN3A1. Upon antigen recognition induces rapid, innate-like immune responses involved in pathogen clearance and tissue repair. Binding of gamma-delta TR complex to antigen triggers phosphorylation of immunoreceptor tyrosine-based activation motifs (ITAMs) in the CD3 chains by the LCK and FYN kinases, allowing the recruitment, phosphorylation, and activation of ZAP70 that facilitates phosphorylation of the scaffolding proteins LCP2 and LAT. This lead to the formation of a supramolecular signalosome that recruits the phospholipase PLCG1, resulting in calcium mobilization and ERK activation, ultimately leading to T cell expansion and differentiation into effector cells. Gamma-delta TRs are produced through somatic rearrangement of a limited repertoire of variable (V), diversity (D), and joining (J) genes. The potential diversity of gamma-delta TRs is conferred by the unique ability to rearrange (D) genes in tandem and to utilize all three reading frames. The combinatorial diversity is considerably increased by the sequence exonuclease trimming and random nucleotide (N) region additions which occur during the V-(D)-J rearrangements. This Homo sapiens (Human) protein is T cell receptor gamma constant 2.